The chain runs to 1328 residues: Myb-binding protein 1A (1328 aa).

The tract at residues 1 to 22 (MESRDPAQPMSPGEATQSGARP) is disordered. The tract at residues 1 to 582 (MESRDPAQPM…WDRMLQTLKE (582 aa)) is interaction with MYB. S11 carries the post-translational modification Phosphoserine. 2 positions are modified to N6-acetyllysine: K71 and K158. 2 short sequence motifs (nuclear export signal) span residues 240 to 258 (SDEN…ASSV) and 263 to 281 (KLPA…EDKF). The interval 698-753 (SEDENDRVVVTDDSDERRLKGAEDKSEEGEDNRSSESEEESEGEESEEEERDGDVD) is disordered. Basic and acidic residues predominate over residues 703–721 (DRVVVTDDSDERRLKGAED). Acidic residues predominate over residues 734–752 (SEEESEGEESEEEERDGDV). S775 is modified (phosphoserine). The interval 1146–1292 (RPKLEKKDAK…KKGVLGKSPL (147 aa)) is disordered. The span at 1147 to 1156 (PKLEKKDAKE) shows a compositional bias: basic and acidic residues. A Glycyl lysine isopeptide (Lys-Gly) (interchain with G-Cter in SUMO2) cross-link involves residue K1148. Residues 1151 to 1328 (KKDAKEIPSA…KAQVRKAGKP (178 aa)) form a required for nuclear and nucleolar localization region. 2 positions are modified to phosphoserine: S1159 and S1163. Residues 1166–1184 (SKKRKKKGFLPETKKRKKR) are compositionally biased toward basic residues. Phosphoserine is present on S1186. T1190 and T1196 each carry phosphothreonine. S1207 carries the post-translational modification Phosphoserine. The span at 1209–1218 (GRKKRNRTKA) shows a compositional bias: basic residues. S1232 carries the phosphoserine modification. Position 1239 is a phosphothreonine (T1239). S1241 carries the post-translational modification Phosphoserine. Phosphothreonine is present on T1244. A phosphoserine mark is found at S1248 and S1267. T1269 is modified (phosphothreonine). Phosphoserine occurs at positions 1290 and 1303. A disordered region spans residues 1306–1328 (IRSPSLLQSGAKKKAQVRKAGKP). Citrulline is present on R1307. A phosphoserine mark is found at S1308, S1310, and S1314. The span at 1316 to 1328 (AKKKAQVRKAGKP) shows a compositional bias: basic residues.

This sequence belongs to the MYBBP1A family. Binds to and represses JUN and MYB via the leucine zipper regions present in these proteins. Also binds to and represses PPARGC1A: this interaction is abrogated when PPARGC1A is phosphorylated by MAPK1/ERK. Binds to and stimulates transcription by AHR. Binds to KPNA2. Interacts with CLOCK and CRY1. Component of the B-WICH complex, at least composed of SMARCA5/SNF2H, BAZ1B/WSTF, SF3B1, DEK, MYO1C, ERCC6, MYBBP1A and DDX21. Citrullinated by PADI4.

It is found in the cytoplasm. Its subcellular location is the nucleus. The protein resides in the nucleolus. Its function is as follows. May activate or repress transcription via interactions with sequence specific DNA-binding proteins. Repression may be mediated at least in part by histone deacetylase activity (HDAC activity). Acts as a corepressor and in concert with CRY1, represses the transcription of the core circadian clock component PER2. Preferentially binds to dimethylated histone H3 'Lys-9' (H3K9me2) on the PER2 promoter. Has a role in rRNA biogenesis together with PWP1. The protein is Myb-binding protein 1A (MYBBP1A) of Homo sapiens (Human).